A 676-amino-acid chain; its full sequence is Cysteine-rich receptor-like protein kinase 8 (676 aa).

The first 34 residues, 1–34, serve as a signal peptide directing secretion; the sequence is MYIVSMFGLAGLEALICFIFLFLFSFLTSFKASA. Over 35 to 291 the chain is Extracellular; it reads QNPFYLNHDC…IPGKSGNSTV (257 aa). Gnk2-homologous domains lie at 38–142 and 151–255; these read FYLN…HKNF and ELIM…LYAF. N-linked (GlcNAc...) asparagine glycans are attached at residues Asn-46, Asn-53, Asn-71, Asn-114, Asn-159, Asn-187, Asn-257, and Asn-288. The helical transmembrane segment at 292–312 threads the bilayer; that stretch reads LVVAIVVLAVLLFIALVGYCF. Residues 313-676 are Cytoplasmic-facing; the sequence is LAQRTKKTFD…DELITDLYPR (364 aa). One can recognise a Protein kinase domain in the interval 353–639; the sequence is FAESNKIGRG…TLPVPRQPGF (287 aa). Residues 359–367 and Lys-381 each bind ATP; that span reads IGRGGFGEV. A Phosphotyrosine modification is found at Tyr-426. Asp-478 acts as the Proton acceptor in catalysis. Ser-482 is modified (phosphoserine). Phosphothreonine is present on Thr-518. Tyr-526 carries the phosphotyrosine modification. The tract at residues 640-666 is disordered; sequence FIQSSPVKDPTDSDQSTTTKSTPASID. The span at 652–662 shows a compositional bias: low complexity; the sequence is SDQSTTTKSTP.

Belongs to the protein kinase superfamily. Ser/Thr protein kinase family. CRK subfamily.

The protein localises to the membrane. It carries out the reaction L-seryl-[protein] + ATP = O-phospho-L-seryl-[protein] + ADP + H(+). The enzyme catalyses L-threonyl-[protein] + ATP = O-phospho-L-threonyl-[protein] + ADP + H(+). The sequence is that of Cysteine-rich receptor-like protein kinase 8 (CRK8) from Arabidopsis thaliana (Mouse-ear cress).